The sequence spans 292 residues: Mitochondrial ornithine transporter 1 (292 aa).

Solcar repeat units lie at residues E11–F97, S105–S196, and S211–L292. 6 consecutive transmembrane segments (helical) span residues I14–F34, F69–V89, V104–V124, G171–F187, I213–P233, and G267–E287.

It belongs to the mitochondrial carrier (TC 2.A.29) family.

The protein resides in the mitochondrion inner membrane. Its function is as follows. Required for arginine biosynthesis. Transports ornithine synthesized from glutamate in the mitochondrial matrix to the cytosol, where it is converted to arginine. The protein is Mitochondrial ornithine transporter 1 (ORT1) of Saccharomyces cerevisiae (strain ATCC 204508 / S288c) (Baker's yeast).